Consider the following 237-residue polypeptide: Ribonuclease PH (237 aa).

Residues arginine 86 and 124–126 (GTR) contribute to the phosphate site.

Belongs to the RNase PH family. In terms of assembly, homohexameric ring arranged as a trimer of dimers.

It carries out the reaction tRNA(n+1) + phosphate = tRNA(n) + a ribonucleoside 5'-diphosphate. Phosphorolytic 3'-5' exoribonuclease that plays an important role in tRNA 3'-end maturation. Removes nucleotide residues following the 3'-CCA terminus of tRNAs; can also add nucleotides to the ends of RNA molecules by using nucleoside diphosphates as substrates, but this may not be physiologically important. Probably plays a role in initiation of 16S rRNA degradation (leading to ribosome degradation) during starvation. This Xanthobacter autotrophicus (strain ATCC BAA-1158 / Py2) protein is Ribonuclease PH.